A 44-amino-acid polypeptide reads, in one-letter code: Conotoxin Sr5.5 (44 aa).

The N-terminal stretch at 1–19 is a signal peptide; that stretch reads MRCLPVFVILLLLIASAPS. The propeptide occupies 20 to 29; that stretch reads VDDNAKGTQH.

This sequence belongs to the conotoxin T superfamily. In terms of processing, contains 2 disulfide bonds that can be either 'C1-C3, C2-C4' or 'C1-C4, C2-C3', since these disulfide connectivities have been observed for conotoxins with cysteine framework V (for examples, see AC P0DQQ7 and AC P81755). As to expression, expressed by the venom duct.

It is found in the secreted. The chain is Conotoxin Sr5.5 from Conus spurius (Alphabet cone).